A 166-amino-acid chain; its full sequence is MAHIEKQAGELQEKLIAVNRVSKTVKGGRIFSFTALTVVGDGNGRVGFGYGKAREVPAAIQKAMEKARRNMMNVALNSGTLQHPIKGVHTGSRVFMQPASEGTGIIAGGAMRAVLEVAGVHNVLAKAYGSTNPINVVRATIDALGNMKSPEMVAAKRGKSVEEILG.

One can recognise an S5 DRBM domain in the interval 11 to 74 (LQEKLIAVNR…EKARRNMMNV (64 aa)).

It belongs to the universal ribosomal protein uS5 family. As to quaternary structure, part of the 30S ribosomal subunit. Contacts proteins S4 and S8.

In terms of biological role, with S4 and S12 plays an important role in translational accuracy. Located at the back of the 30S subunit body where it stabilizes the conformation of the head with respect to the body. The protein is Small ribosomal subunit protein uS5 of Sodalis glossinidius (strain morsitans).